A 358-amino-acid chain; its full sequence is WD repeat-containing protein 53 (358 aa).

WD repeat units lie at residues G8 to T46, V92 to S131, R134 to I174, L195 to E234, and G239 to H278. The segment covering H278–A294 has biased composition (basic residues). Positions H278–E309 are disordered.

This sequence belongs to the WD repeat WDR53 family.

This is WD repeat-containing protein 53 (WDR53) from Bos taurus (Bovine).